Reading from the N-terminus, the 470-residue chain is tRNA-2-methylthio-N(6)-dimethylallyladenosine synthase (470 aa).

Positions 5-122 (RKLYVKSFGC…LPELLAEAKA (118 aa)) constitute an MTTase N-terminal domain. Residues cysteine 14, cysteine 50, cysteine 85, cysteine 163, cysteine 167, and cysteine 170 each coordinate [4Fe-4S] cluster. The region spanning 149 to 383 (RSRGPAAFVT…LLEASKAAFD (235 aa)) is the Radical SAM core domain. The region spanning 384–446 (ESCRGRTFDI…PNSLAGVPAE (63 aa)) is the TRAM domain. The segment at 439-470 (SLAGVPAEASEPSVSQSPVSSARSRPLAAMEA) is disordered. Residues 444-464 (PAEASEPSVSQSPVSSARSRP) are compositionally biased toward low complexity.

The protein belongs to the methylthiotransferase family. MiaB subfamily. Monomer. [4Fe-4S] cluster is required as a cofactor.

The protein localises to the cytoplasm. The catalysed reaction is N(6)-dimethylallyladenosine(37) in tRNA + (sulfur carrier)-SH + AH2 + 2 S-adenosyl-L-methionine = 2-methylsulfanyl-N(6)-dimethylallyladenosine(37) in tRNA + (sulfur carrier)-H + 5'-deoxyadenosine + L-methionine + A + S-adenosyl-L-homocysteine + 2 H(+). Its function is as follows. Catalyzes the methylthiolation of N6-(dimethylallyl)adenosine (i(6)A), leading to the formation of 2-methylthio-N6-(dimethylallyl)adenosine (ms(2)i(6)A) at position 37 in tRNAs that read codons beginning with uridine. The sequence is that of tRNA-2-methylthio-N(6)-dimethylallyladenosine synthase from Xanthobacter autotrophicus (strain ATCC BAA-1158 / Py2).